The chain runs to 363 residues: MRLVISGGGTGGHIYPALALIEALKAEGKLDDVLYVGTKRGLESRIVPATGLKFATLDLQGFKRSLSLSNFTTVRKFLGSLGEAKKLLQDFQPDIVVGTGGYVSGAILFAATRLHIPTVIHESNSVAGVTNKFLSHFVDRVAIVFPEVAKAFPANKVVVTGNPRAQQVAGLKPNDRLRDFGLDPHIRTLLAFGGSRGAPRINDAVVAALPIWAKADFQVLFATGRTHYDQIKAKLPDLPATIKVVPYIDDMPSILPDIGLLISRAGATTLAEITALGIPAVLIPSPNVTHHHQFLNAQSLTKQGAAITITEDELDNHFPRRVVTLMEDDEKRAAMAKASKKLGVPDASDQLIAVMTTLLSKRR.

Residues 10 to 12 (TGG), N124, S195, I248, and Q293 each bind UDP-N-acetyl-alpha-D-glucosamine.

Belongs to the glycosyltransferase 28 family. MurG subfamily.

Its subcellular location is the cell membrane. The catalysed reaction is Mur2Ac(oyl-L-Ala-gamma-D-Glu-L-Lys-D-Ala-D-Ala)-di-trans,octa-cis-undecaprenyl diphosphate + UDP-N-acetyl-alpha-D-glucosamine = beta-D-GlcNAc-(1-&gt;4)-Mur2Ac(oyl-L-Ala-gamma-D-Glu-L-Lys-D-Ala-D-Ala)-di-trans,octa-cis-undecaprenyl diphosphate + UDP + H(+). It functions in the pathway cell wall biogenesis; peptidoglycan biosynthesis. In terms of biological role, cell wall formation. Catalyzes the transfer of a GlcNAc subunit on undecaprenyl-pyrophosphoryl-MurNAc-pentapeptide (lipid intermediate I) to form undecaprenyl-pyrophosphoryl-MurNAc-(pentapeptide)GlcNAc (lipid intermediate II). This chain is UDP-N-acetylglucosamine--N-acetylmuramyl-(pentapeptide) pyrophosphoryl-undecaprenol N-acetylglucosamine transferase, found in Lacticaseibacillus casei (strain BL23) (Lactobacillus casei).